Here is a 442-residue protein sequence, read N- to C-terminus: G-protein coupled receptor family C group 5 member C (442 aa).

Residues 1–23 (MAIHRTVLMCLGLPLFLLPGARA) form the signal peptide. At 24–50 (QEQAPPGCSPDLNPLYYNLCDRSEAWG) the chain is on the extracellular side. The helical transmembrane segment at 51–71 (IILEAVAGAGVVTTFVLTIIL) threads the bilayer. At 72 to 85 (VASLPFVQDTKKRS) the chain is on the cytoplasmic side. A helical transmembrane segment spans residues 86 to 106 (LLGTQVFFLLGTLGLFCLVFA). Topologically, residues 107-120 (CVVKPSFSTCASRR) are extracellular. Residues 121 to 141 (FLFGVLFAICFSCLVAHVLAL) form a helical membrane-spanning segment. Topologically, residues 142 to 155 (HFLVRKNHGPRGWV) are cytoplasmic. A helical membrane pass occupies residues 156–176 (IFLVALLLSLVEVIINTEWLI). Residues 177–209 (ITLVRGAGTEGDALGNGSAGWVAVSPCAIANAD) lie on the Extracellular side of the membrane. N-linked (GlcNAc...) asparagine glycosylation is present at N192. A helical transmembrane segment spans residues 210–230 (FVMALIYVMLLLLCAFSGAWS). The Cytoplasmic segment spans residues 231–242 (ALCGRFKRWRKH). Residues 243 to 263 (GVFILLTTTASIAVWVVWIVM) form a helical membrane-spanning segment. Residues 264–280 (YTYGNRQHNSPTWDDPT) are Extracellular-facing. Residues 281 to 301 (LAIALATNAWAFVLFYVIPEV) traverse the membrane as a helical segment. The Cytoplasmic portion of the chain corresponds to 302 to 442 (SQVTRSSPEQ…QVFRNPYVWD (141 aa)). Phosphoserine occurs at positions 345, 384, 404, and 407. Residue Y415 is modified to Phosphotyrosine. T424 is subject to Phosphothreonine.

The protein belongs to the G-protein coupled receptor 3 family.

The protein localises to the cell membrane. This retinoic acid-inducible G-protein coupled receptor provide evidence for a possible interaction between retinoid and G-protein signaling pathways. This Bos taurus (Bovine) protein is G-protein coupled receptor family C group 5 member C (GPRC5C).